Reading from the N-terminus, the 104-residue chain is Succinate dehydrogenase assembly factor 4, mitochondrial (104 aa).

A mitochondrion-targeting transit peptide spans 1 to 30; it reads MVSTTLSVSRMTFVWRAARPSLLNHSLRKM. Residues 29 to 104 are disordered; it reads KMSYQEGKPE…WERKGRCIDF (76 aa). Composition is skewed to basic and acidic residues over residues 63–83 and 91–104; these read EREP…EKGG and RYGD…CIDF.

This sequence belongs to the SDHAF4 family. In terms of assembly, interacts with Sdha in its FAD-bound form.

Its subcellular location is the mitochondrion matrix. Functionally, plays an essential role in the assembly of succinate dehydrogenase (SDH), an enzyme complex (also referred to as respiratory complex II) that is a component of both the tricarboxylic acid (TCA) cycle and the mitochondrial electron transport chain, and which couples the oxidation of succinate to fumarate with the reduction of ubiquinone (coenzyme Q) to ubiquinol. Binds to the flavoprotein subunit Sdha in its FAD-bound form, blocking the generation of excess reactive oxygen species (ROS) and facilitating its assembly with the iron-sulfur protein subunit Sdhb into the SDH catalytic dimer. This is Succinate dehydrogenase assembly factor 4, mitochondrial from Mus musculus (Mouse).